Here is a 1861-residue protein sequence, read N- to C-terminus: Polyketide synthase 2 (1861 aa).

Residues 109 to 525 (DSKIAIIGMS…GGNSALLLED (417 aa)) enclose the Ketosynthase family 3 (KS3) domain. Catalysis depends on for beta-ketoacyl synthase activity residues Cys264, His399, and His441. Residues 626 to 931 (GFVFSGQGAQ…PSLHRKDDGW (306 aa)) are malonyl-CoA:ACP transacylase (MAT) domain. The active-site For acyl/malonyl transferase activity is Ser716. The interval 1008–1312 (TSSVQKVIQQ…VFGGMTVLPP (305 aa)) is product template (PT) domain. Positions 1012 to 1146 (QKVIQQTDGP…CILRFADPKS (135 aa)) are N-terminal hotdog fold. One can recognise a PKS/mFAS DH domain in the interval 1012-1318 (QKVIQQTDGP…VLPPRRGADA (307 aa)). The active-site Proton acceptor; for dehydratase activity is His1045. Positions 1174-1318 (DSLLSKGIVY…VLPPRRGADA (145 aa)) are C-terminal hotdog fold. The active-site Proton donor; for dehydratase activity is Asp1232. Positions 1356-1433 (SPQSGAIHRI…ELRLFLAADQ (78 aa)) constitute a Carrier 1 domain. Position 1393 is an O-(pantetheine 4'-phosphoryl)serine (Ser1393). Positions 1441–1470 (CESSNGQHTPQTSDKGSGTLTAQKPDHDTD) are disordered. Polar residues predominate over residues 1442 to 1462 (ESSNGQHTPQTSDKGSGTLTA). A Carrier 2 domain is found at 1472 to 1546 (EMTLNRVCAI…SLQKTLRGTE (75 aa)). Ser1506 carries the O-(pantetheine 4'-phosphoryl)serine modification. Residues 1582-1855 (ASAPHATSIL…IIEMSNLIGD (274 aa)) form a thioesterase (TE) domain region. Ser1685 functions as the For thioesterase activity in the catalytic mechanism.

Its function is as follows. Polyketide synthase; part of the Pks2 gene cluster that mediates the formation of infectious structures (appressoria), enabling these fungi to kill insects faster. The product of the Pks2 gene cluster is different from the one of Pks1 and has still not been identified. The protein is Polyketide synthase 2 of Metarhizium acridum (strain CQMa 102).